The chain runs to 331 residues: Protoheme IX farnesyltransferase (331 aa).

Transmembrane regions (helical) follow at residues 63–83 (LACTLGGGALAAAAAGALNCL), 109–129 (SVFIGAVACTLVSSALLVSGV), 132–152 (LAAGLTLLGLCSYVLLYTAFL), 160–180 (IVFGGVAGAIPPLVGASAAAG), 188–208 (WLFSLVMVWTPAHFWALAILL), 215–235 (VGIPMLPTVSGPFVTAKAISV), 241–261 (VFLSFLGCFVLPEGGLLYGIL), and 294–314 (ILYMFGVCFLLVISRLQVSIV).

The protein belongs to the UbiA prenyltransferase family. Protoheme IX farnesyltransferase subfamily.

Its subcellular location is the cell inner membrane. The enzyme catalyses heme b + (2E,6E)-farnesyl diphosphate + H2O = Fe(II)-heme o + diphosphate. The protein operates within porphyrin-containing compound metabolism; heme O biosynthesis; heme O from protoheme: step 1/1. Converts heme B (protoheme IX) to heme O by substitution of the vinyl group on carbon 2 of heme B porphyrin ring with a hydroxyethyl farnesyl side group. This chain is Protoheme IX farnesyltransferase, found in Prochlorococcus marinus (strain NATL1A).